The sequence spans 337 residues: Protein ABHD13 (337 aa).

A helical; Signal-anchor for type II membrane protein membrane pass occupies residues 37-57 (FHLYGGIVLLLLIFVSIAGIL). Catalysis depends on charge relay system residues Ser-193, Asp-268, and His-298. Residue Asn-299 is glycosylated (N-linked (GlcNAc...) asparagine).

It belongs to the serine esterase family.

The protein localises to the membrane. The polypeptide is Protein ABHD13 (Mus musculus (Mouse)).